We begin with the raw amino-acid sequence, 1252 residues long: Myosin-3 (1252 aa).

A Myosin motor domain is found at 36–715 (VGVSDLTLLS…TLFALENMRD (680 aa)). An ATP-binding site is contributed by 129 to 136 (GESGAGKT). At serine 357 the chain carries Phosphoserine. The actin-binding stretch occupies residues 404-486 (SIGILDIYGF…PGIFAAMNDA (83 aa)). 2 consecutive IQ domains span residues 719 to 739 (YNMA…RIDA) and 740 to 767 (AIRI…AGDK). One can recognise a TH1 domain in the interval 773-963 (KERRNMSLLG…TILVRHGNPP (191 aa)). Disordered stretches follow at residues 988–1086 (KTMK…KTSV), 1106–1136 (YSLP…PSEL), and 1203–1252 (INEP…DDDW). Positions 997 to 1016 (KRTPQALPTSSLAASAAQAA) are enriched in low complexity. 3 stretches are compositionally biased toward polar residues: residues 1050-1063 (PVRN…NSKV), 1106-1121 (YSLP…TDSY), and 1203-1219 (INEP…NTDL). Residues 1116-1178 (SQTDSYQAAY…PTSYIVKYNG (63 aa)) form the SH3 domain. Acidic residues predominate over residues 1238 to 1252 (SEEDISREEDDDDDW).

Belongs to the TRAFAC class myosin-kinesin ATPase superfamily. Myosin family. Post-translationally, phosphorylation of the TEDS site (Ser-357) is required for the polarization of the actin cytoskeleton. Phosphorylation probably activates the myosin-I ATPase activity.

The protein localises to the cytoplasm. It localises to the cytoskeleton. The protein resides in the actin patch. Type-I myosin implicated in the organization of the actin cytoskeleton. Required for proper actin cytoskeleton polarization. At the cell cortex, assembles in patch-like structures together with proteins from the actin-polymerizing machinery and promotes actin assembly. Functions as actin nucleation-promoting factor (NPF) for the Arp2/3 complex. This is Myosin-3 (MYO3) from Candida glabrata (strain ATCC 2001 / BCRC 20586 / JCM 3761 / NBRC 0622 / NRRL Y-65 / CBS 138) (Yeast).